The chain runs to 428 residues: UPF0761 membrane protein Ppha_1623 (428 aa).

The next 6 membrane-spanning stretches (helical) occupy residues L52–F72, S108–V128, F148–A168, L189–V209, F216–S233, and G252–L272.

It belongs to the UPF0761 family.

The protein resides in the cell inner membrane. The sequence is that of UPF0761 membrane protein Ppha_1623 from Pelodictyon phaeoclathratiforme (strain DSM 5477 / BU-1).